The primary structure comprises 985 residues: Eukaryotic translation initiation factor 4E transporter (985 aa).

The segment at 1-24 (MDRRSMGETESGDAFLDLKKPPAS) is disordered. Ser-5 carries the phosphoserine modification. Residues 30 to 36 (YTKEELL) carry the YXXXXLphi motif motif. Ser-74, Ser-78, Ser-115, Ser-120, Ser-136, and Ser-138 each carry phosphoserine. Residues 131-161 (VSSRRSGSPLEKDSDGLRLLGGRRIGSGRII) are interaction with CSDE1. Residues 195–211 (RREFGDSKRVFGERRRN) carry the Nuclear localization signal motif. A disordered region spans residues 208–230 (RRRNDSYTEEEPEWFSAGPTSQS). An interaction with DDX6 region spans residues 219–240 (PEWFSAGPTSQSETIELTGFDD). Residues Ser-301, Ser-345, Ser-353, and Ser-374 each carry the phosphoserine modification. Lys-410 participates in a covalent cross-link: Glycyl lysine isopeptide (Lys-Gly) (interchain with G-Cter in SUMO2). Ser-417 is modified (phosphoserine). The Nuclear export signal signature appears at 438–447 (VEAGLKGLKV). The segment at 448–490 (DQQVKNSTPFMAEHLEETLSAVTNNRQLKKDGDMTAFNKLVST) is interaction with LSM14A. Lys-486 carries the post-translational modification N6-acetyllysine. 3 positions are modified to phosphoserine: Ser-513, Ser-564, and Ser-587. A Nuclear export signal motif is present at residues 613–638 (ITAQMSQLELQQAALEGLALPHDLAV). Disordered regions lie at residues 664–693 (QQRVTKSPAPVHRGNSSSPAPAASITSMLS) and 707–803 (ESKE…PTTP). The residue at position 693 (Ser-693) is a Phosphoserine. The interval 695–713 (SFTPTSVIRKMYESKEKSK) is interaction with PATL1. Composition is skewed to basic and acidic residues over residues 707 to 717 (ESKEKSKEEPA) and 725 to 735 (DSKEDTQKASE). Over residues 736–746 (ENLLSSSSVPS) the composition is skewed to low complexity. Ser-752 carries the post-translational modification Phosphoserine. Polar residues predominate over residues 754–776 (TTNSKLSALQRSSCSTPLSQANR). Ser-920 and Ser-951 each carry phosphoserine. A disordered region spans residues 922 to 953 (QTTPQNVPSRSGLPHMHSQLEHRPSQRSSSPV). The interaction with LSM14A stretch occupies residues 940–985 (QLEHRPSQRSSSPVGLAKWFGSDVLQQPLPSMPAKVISVDELEYRQ).

Belongs to the 4E-T/EIF4E-T family. In terms of assembly, interacts (via YXXXXLphi motif) with EIF4E. Interacts (via YXXXXLphi motif) with EIF4E2. Interacts with DDX6. Interacts with CSDE1/UNR. Interacts with CNOT1; promoting association with the CCR4-NOT complex. Interacts with LSM14A; promoting EIF4ENIF1 localization to P-bodies. Interacts with PATL1. Interacts with importin beta only in the presence of importin alpha, suggesting a direct interaction with importin alpha. Interacts with APOBEC3G in an RNA-dependent manner. Phosphorylation by MAPK8/JNK1 and or MAPK9/JNK2 in response to oxidative stress promotes P-body assembly. Phosphorylated during meiotic maturation. In terms of tissue distribution, widely expressed.

The protein resides in the cytoplasm. Its subcellular location is the P-body. The protein localises to the nucleus. It is found in the PML body. It localises to the nucleus speckle. Its function is as follows. EIF4E-binding protein that regulates translation and stability of mRNAs in processing bodies (P-bodies). Plays a key role in P-bodies to coordinate the storage of translationally inactive mRNAs in the cytoplasm and prevent their degradation. Acts as a binding platform for multiple RNA-binding proteins: promotes deadenylation of mRNAs via its interaction with the CCR4-NOT complex, and blocks decapping via interaction with eIF4E (EIF4E and EIF4E2), thereby protecting deadenylated and repressed mRNAs from degradation. Component of a multiprotein complex that sequesters and represses translation of proneurogenic factors during neurogenesis. Promotes miRNA-mediated translational repression. Required for the formation of P-bodies. Involved in mRNA translational repression mediated by the miRNA effector TNRC6B by protecting TNRC6B-targeted mRNAs from decapping and subsequent decay. Also acts as a nucleoplasmic shuttling protein, which mediates the nuclear import of EIF4E and DDX6 by a piggy-back mechanism. The sequence is that of Eukaryotic translation initiation factor 4E transporter from Homo sapiens (Human).